The sequence spans 154 residues: Ribonuclease P protein component (154 aa).

It belongs to the RnpA family. As to quaternary structure, consists of a catalytic RNA component (M1 or rnpB) and a protein subunit.

It carries out the reaction Endonucleolytic cleavage of RNA, removing 5'-extranucleotides from tRNA precursor.. Its function is as follows. RNaseP catalyzes the removal of the 5'-leader sequence from pre-tRNA to produce the mature 5'-terminus. It can also cleave other RNA substrates such as 4.5S RNA. The protein component plays an auxiliary but essential role in vivo by binding to the 5'-leader sequence and broadening the substrate specificity of the ribozyme. This Chlorobaculum tepidum (strain ATCC 49652 / DSM 12025 / NBRC 103806 / TLS) (Chlorobium tepidum) protein is Ribonuclease P protein component.